Reading from the N-terminus, the 561-residue chain is Sesquiterpene synthase 2 (561 aa).

Mg(2+) contacts are provided by D313, D317, D458, and E466. A DDXXD motif motif is present at residues 313 to 317 (DDIYD).

It belongs to the terpene synthase family. Tpsa subfamily. Requires Mn(2+) as cofactor. The cofactor is Mg(2+).

The protein localises to the cytoplasm. It catalyses the reaction (2E,6E)-farnesyl diphosphate + H2O = kunzeaol + diphosphate. Its pathway is secondary metabolite biosynthesis; terpenoid biosynthesis. In terms of biological role, involved in the biosynthesis of kunzeaol. Produces mainly (-)-germacrene D along with gamma-cadinene. This chain is Sesquiterpene synthase 2 (STS2), found in Thapsia garganica (Deadly carrot).